The chain runs to 448 residues: Phosphohexose mutases (448 aa).

Residue Ser-97 is the Phosphoserine intermediate of the active site. The Mg(2+) site is built by Ser-97, Asp-237, Asp-239, and Asp-241.

It belongs to the phosphohexose mutase family. Mg(2+) serves as cofactor.

The catalysed reaction is alpha-D-glucose 1-phosphate = alpha-D-glucose 6-phosphate. It carries out the reaction alpha-D-mannose 1-phosphate = D-mannose 6-phosphate. It functions in the pathway nucleotide-sugar biosynthesis; GDP-alpha-D-mannose biosynthesis; alpha-D-mannose 1-phosphate from D-fructose 6-phosphate: step 2/2. In terms of biological role, involved in xanthan production. The polypeptide is Phosphohexose mutases (xanA) (Xanthomonas campestris pv. campestris (strain B100)).